We begin with the raw amino-acid sequence, 430 residues long: Tol-Pal system protein TolB (430 aa).

An N-terminal signal peptide occupies residues 1-21 (MKQAFRVALGFFLLWASVLHA).

Belongs to the TolB family. The Tol-Pal system is composed of five core proteins: the inner membrane proteins TolA, TolQ and TolR, the periplasmic protein TolB and the outer membrane protein Pal. They form a network linking the inner and outer membranes and the peptidoglycan layer.

The protein resides in the periplasm. Its function is as follows. Part of the Tol-Pal system, which plays a role in outer membrane invagination during cell division and is important for maintaining outer membrane integrity. TolB occupies a key intermediary position in the Tol-Pal system because it communicates directly with both membrane-embedded components, Pal in the outer membrane and TolA in the inner membrane. This chain is Tol-Pal system protein TolB, found in Sodalis glossinidius (strain morsitans).